The chain runs to 496 residues: ATP synthase subunit beta (496 aa).

155-162 (GGAGVGKT) is an ATP binding site.

This sequence belongs to the ATPase alpha/beta chains family. As to quaternary structure, F-type ATPases have 2 components, CF(1) - the catalytic core - and CF(0) - the membrane proton channel. CF(1) has five subunits: alpha(3), beta(3), gamma(1), delta(1), epsilon(1). CF(0) has three main subunits: a(1), b(2) and c(9-12). The alpha and beta chains form an alternating ring which encloses part of the gamma chain. CF(1) is attached to CF(0) by a central stalk formed by the gamma and epsilon chains, while a peripheral stalk is formed by the delta and b chains.

The protein localises to the cell membrane. It catalyses the reaction ATP + H2O + 4 H(+)(in) = ADP + phosphate + 5 H(+)(out). In terms of biological role, produces ATP from ADP in the presence of a proton gradient across the membrane. The catalytic sites are hosted primarily by the beta subunits. This is ATP synthase subunit beta from Karelsulcia muelleri (strain GWSS) (Sulcia muelleri).